A 443-amino-acid chain; its full sequence is Glutamyl-tRNA reductase (443 aa).

Residues 49–52, Ser109, 114–116, and Gln120 contribute to the substrate site; these read TCNR and EPQ. Cys50 acts as the Nucleophile in catalysis. Residue 189-194 coordinates NADP(+); the sequence is GAGKMC. Positions 421 to 443 are disordered; sequence PDSQQTGGDSVEKDADSKQDLTS. Residues 430–443 show a composition bias toward basic and acidic residues; the sequence is SVEKDADSKQDLTS.

It belongs to the glutamyl-tRNA reductase family. In terms of assembly, homodimer.

It carries out the reaction (S)-4-amino-5-oxopentanoate + tRNA(Glu) + NADP(+) = L-glutamyl-tRNA(Glu) + NADPH + H(+). It participates in porphyrin-containing compound metabolism; protoporphyrin-IX biosynthesis; 5-aminolevulinate from L-glutamyl-tRNA(Glu): step 1/2. Functionally, catalyzes the NADPH-dependent reduction of glutamyl-tRNA(Glu) to glutamate 1-semialdehyde (GSA). This Syntrophotalea carbinolica (strain DSM 2380 / NBRC 103641 / GraBd1) (Pelobacter carbinolicus) protein is Glutamyl-tRNA reductase.